The primary structure comprises 688 residues: Two-component response regulator ORR23 (688 aa).

Residues Arg25 to Ile140 enclose the Response regulatory domain. Asp76 is subject to 4-aspartylphosphate. The interval Pro161–Pro212 is disordered. Acidic residues predominate over residues Ser193–Asp208. Residues Ala211–Lys270 constitute a DNA-binding region (myb-like GARP).

This sequence belongs to the ARR family. Type-B subfamily. Two-component system major event consists of a His-to-Asp phosphorelay between a sensor histidine kinase (HK) and a response regulator (RR). In plants, the His-to-Asp phosphorelay involves an additional intermediate named Histidine-containing phosphotransfer protein (HPt). This multistep phosphorelay consists of a His-Asp-His-Asp sequential transfer of a phosphate group between first a His and an Asp of the HK protein, followed by the transfer to a conserved His of the HPt protein and finally the transfer to an Asp in the receiver domain of the RR protein.

Its subcellular location is the nucleus. Functionally, transcriptional activator that binds specific DNA sequence. Functions as a response regulator involved in His-to-Asp phosphorelay signal transduction system. Phosphorylation of the Asp residue in the receiver domain activates the ability of the protein to promote the transcription of target genes. May directly activate some type-A response regulators in response to cytokinins. This Oryza sativa subsp. japonica (Rice) protein is Two-component response regulator ORR23.